The sequence spans 130 residues: Small ribosomal subunit protein uS9 (130 aa).

Belongs to the universal ribosomal protein uS9 family.

The polypeptide is Small ribosomal subunit protein uS9 (Burkholderia multivorans (strain ATCC 17616 / 249)).